The following is a 201-amino-acid chain: MAERRIPFTLQRTPSWDVPDLHQTSRIFDQAFGLPPVFEDFSGFPTTHWPGYMRPSLMTPDIMIPQSPMMYHPGHMMAHQARALSRQMSSGMSEIKQTQDNWKISLDVPHFSPEELVVKTKDGVLEISGKHEERKDEHGFVSRSFTRKYTLPPTANIEKVTSSLSPEGVLTVEAPINKPALEYSETTIPVNVESSGAVAKK.

Position 15 is a phosphoserine; by PKA and PKC (Ser-15). The sHSP domain maps to 83 to 193 (ALSRQMSSGM…SETTIPVNVE (111 aa)).

Belongs to the small heat shock protein (HSP20) family. As to quaternary structure, homooligomer. Homodimer; becomes monomeric upon activation. Heterooligomer.

The protein resides in the cytoplasm. It localises to the nucleus. Its subcellular location is the cytoskeleton. The protein localises to the spindle. In terms of biological role, small heat shock protein which functions as a molecular chaperone probably maintaining denatured proteins in a folding-competent state. Plays a role in stress resistance and actin organization. This chain is Heat shock protein beta-1 (hspb1), found in Poeciliopsis lucida (Desert topminnow).